Consider the following 156-residue polypeptide: Small ribosomal subunit protein uS7 (156 aa).

Belongs to the universal ribosomal protein uS7 family. Part of the 30S ribosomal subunit. Contacts proteins S9 and S11.

One of the primary rRNA binding proteins, it binds directly to 16S rRNA where it nucleates assembly of the head domain of the 30S subunit. Is located at the subunit interface close to the decoding center, probably blocks exit of the E-site tRNA. This chain is Small ribosomal subunit protein uS7, found in Clostridium botulinum (strain Alaska E43 / Type E3).